The primary structure comprises 174 residues: NADH-quinone oxidoreductase subunit B 1 (174 aa).

Cys-53, Cys-54, Cys-118, and Cys-148 together coordinate [4Fe-4S] cluster.

Belongs to the complex I 20 kDa subunit family. In terms of assembly, NDH-1 is composed of 14 different subunits. Subunits NuoB, C, D, E, F, and G constitute the peripheral sector of the complex. Requires [4Fe-4S] cluster as cofactor.

It localises to the cell inner membrane. It carries out the reaction a quinone + NADH + 5 H(+)(in) = a quinol + NAD(+) + 4 H(+)(out). Its function is as follows. NDH-1 shuttles electrons from NADH, via FMN and iron-sulfur (Fe-S) centers, to quinones in the respiratory chain. The immediate electron acceptor for the enzyme in this species is believed to be ubiquinone. Couples the redox reaction to proton translocation (for every two electrons transferred, four hydrogen ions are translocated across the cytoplasmic membrane), and thus conserves the redox energy in a proton gradient. The sequence is that of NADH-quinone oxidoreductase subunit B 1 from Cereibacter sphaeroides (strain KD131 / KCTC 12085) (Rhodobacter sphaeroides).